Consider the following 177-residue polypeptide: ATP synthase subunit b (177 aa).

A helical transmembrane segment spans residues 29-49 (FFFVLAIFLIVLAVIGTFVVP).

This sequence belongs to the ATPase B chain family. F-type ATPases have 2 components, F(1) - the catalytic core - and F(0) - the membrane proton channel. F(1) has five subunits: alpha(3), beta(3), gamma(1), delta(1), epsilon(1). F(0) has three main subunits: a(1), b(2) and c(10-14). The alpha and beta chains form an alternating ring which encloses part of the gamma chain. F(1) is attached to F(0) by a central stalk formed by the gamma and epsilon chains, while a peripheral stalk is formed by the delta and b chains.

The protein localises to the cell membrane. Its function is as follows. F(1)F(0) ATP synthase produces ATP from ADP in the presence of a proton or sodium gradient. F-type ATPases consist of two structural domains, F(1) containing the extramembraneous catalytic core and F(0) containing the membrane proton channel, linked together by a central stalk and a peripheral stalk. During catalysis, ATP synthesis in the catalytic domain of F(1) is coupled via a rotary mechanism of the central stalk subunits to proton translocation. In terms of biological role, component of the F(0) channel, it forms part of the peripheral stalk, linking F(1) to F(0). This Mycolicibacterium paratuberculosis (strain ATCC BAA-968 / K-10) (Mycobacterium paratuberculosis) protein is ATP synthase subunit b.